The sequence spans 499 residues: Ribose import ATP-binding protein RbsA (499 aa).

ABC transporter domains are found at residues 3–240 and 250–494; these read VEMT…VGRA and LTPG…TGGD. ATP is bound at residue 35-42; sequence GENGAGKS.

Belongs to the ABC transporter superfamily. Ribose importer (TC 3.A.1.2.1) family. As to quaternary structure, the complex is composed of an ATP-binding protein (RbsA), two transmembrane proteins (RbsC) and a solute-binding protein (RbsB).

The protein localises to the cell membrane. The enzyme catalyses D-ribose(out) + ATP + H2O = D-ribose(in) + ADP + phosphate + H(+). Its function is as follows. Part of the ABC transporter complex RbsABC involved in ribose import. Responsible for energy coupling to the transport system. In Halalkalibacterium halodurans (strain ATCC BAA-125 / DSM 18197 / FERM 7344 / JCM 9153 / C-125) (Bacillus halodurans), this protein is Ribose import ATP-binding protein RbsA.